The following is a 694-amino-acid chain: Elongation factor G (694 aa).

A tr-type G domain is found at 8–287; it reads EDYRNFGIMA…AVISYLPSPV (280 aa). Residues 17–24, 86–90, and 140–143 each bind GTP; these read AHIDAGKT, DTPGH, and NKMD.

It belongs to the TRAFAC class translation factor GTPase superfamily. Classic translation factor GTPase family. EF-G/EF-2 subfamily.

Its subcellular location is the cytoplasm. Catalyzes the GTP-dependent ribosomal translocation step during translation elongation. During this step, the ribosome changes from the pre-translocational (PRE) to the post-translocational (POST) state as the newly formed A-site-bound peptidyl-tRNA and P-site-bound deacylated tRNA move to the P and E sites, respectively. Catalyzes the coordinated movement of the two tRNA molecules, the mRNA and conformational changes in the ribosome. The sequence is that of Elongation factor G from Bartonella quintana (strain Toulouse) (Rochalimaea quintana).